Reading from the N-terminus, the 291-residue chain is Light-independent protochlorophyllide reductase iron-sulfur ATP-binding protein (291 aa).

ATP-binding positions include 10 to 15 and lysine 39; that span reads GIGKST. Residue serine 14 participates in Mg(2+) binding. [4Fe-4S] cluster contacts are provided by cysteine 95 and cysteine 129. 180–181 lines the ATP pocket; sequence NR.

The protein belongs to the NifH/BchL/ChlL family. As to quaternary structure, homodimer. Protochlorophyllide reductase is composed of three subunits; ChlL, ChlN and ChlB. [4Fe-4S] cluster serves as cofactor.

The protein localises to the plastid. Its subcellular location is the chloroplast. The catalysed reaction is chlorophyllide a + oxidized 2[4Fe-4S]-[ferredoxin] + 2 ADP + 2 phosphate = protochlorophyllide a + reduced 2[4Fe-4S]-[ferredoxin] + 2 ATP + 2 H2O. The protein operates within porphyrin-containing compound metabolism; chlorophyll biosynthesis (light-independent). Component of the dark-operative protochlorophyllide reductase (DPOR) that uses Mg-ATP and reduced ferredoxin to reduce ring D of protochlorophyllide (Pchlide) to form chlorophyllide a (Chlide). This reaction is light-independent. The L component serves as a unique electron donor to the NB-component of the complex, and binds Mg-ATP. In Picea abies (Norway spruce), this protein is Light-independent protochlorophyllide reductase iron-sulfur ATP-binding protein.